Here is a 244-residue protein sequence, read N- to C-terminus: MASIRVADEPAFVLHSIPYKETSLILDVFTRQYGRMALIAKGAKRQHSTLRPVLQRFQPLLVSWSGKSELRTLTKSEWVGGMPSLVGDALLCGFYLNELLVKFLAREDDYEKLYDRYAETINALSNLEFESKGLEEILRQFELSLLQETGYAAALDRCVENNEAPLAQEQYVYQPERGVRPVQVDDPGHWPVLTGKSLLAIAISDFSDPETLSESKQLMRFLLGLHLQDQVLTTRQILIDLKKI.

This sequence belongs to the RecO family.

Functionally, involved in DNA repair and RecF pathway recombination. This Polynucleobacter necessarius subsp. necessarius (strain STIR1) protein is DNA repair protein RecO.